The primary structure comprises 75 residues: Transaldolase (75 aa).

The protein belongs to the transaldolase family. Type 1 subfamily. In terms of assembly, homodimer. Phosphorylated. In terms of tissue distribution, predominantly expressed in Y-organs.

Its subcellular location is the cytoplasm. The enzyme catalyses D-sedoheptulose 7-phosphate + D-glyceraldehyde 3-phosphate = D-erythrose 4-phosphate + beta-D-fructose 6-phosphate. The protein operates within carbohydrate degradation; pentose phosphate pathway; D-glyceraldehyde 3-phosphate and beta-D-fructose 6-phosphate from D-ribose 5-phosphate and D-xylulose 5-phosphate (non-oxidative stage): step 2/3. Transaldolase is important for the balance of metabolites in the pentose-phosphate pathway. May play a role in the conversion of sterols into ecdysteroids via NADPH. The protein is Transaldolase of Carcinus maenas (Common shore crab).